The primary structure comprises 202 residues: Nucleoside triphosphate pyrophosphatase (202 aa).

The Proton acceptor role is filled by aspartate 79.

Belongs to the Maf family. Requires a divalent metal cation as cofactor.

It is found in the cytoplasm. It carries out the reaction a ribonucleoside 5'-triphosphate + H2O = a ribonucleoside 5'-phosphate + diphosphate + H(+). The catalysed reaction is a 2'-deoxyribonucleoside 5'-triphosphate + H2O = a 2'-deoxyribonucleoside 5'-phosphate + diphosphate + H(+). Its function is as follows. Nucleoside triphosphate pyrophosphatase. May have a dual role in cell division arrest and in preventing the incorporation of modified nucleotides into cellular nucleic acids. This is Nucleoside triphosphate pyrophosphatase from Nitrobacter winogradskyi (strain ATCC 25391 / DSM 10237 / CIP 104748 / NCIMB 11846 / Nb-255).